The following is a 144-amino-acid chain: Tryparedoxin (144 aa).

A Thioredoxin domain is found at 2–144 (SGLAKYLPGA…PDGANFPWPN (143 aa)). The cysteines at positions 40 and 43 are disulfide-linked.

This sequence belongs to the thioredoxin family.

Functionally, acts as a thiol-disulfide oxidoreductase. It is spontaneously reduced by trypanothione. The chain is Tryparedoxin from Trypanosoma brucei brucei.